The primary structure comprises 87 residues: Small ribosomal subunit protein uS15 (87 aa).

The segment covering 1-19 (MEKARKEQLIREYATHEGD) has biased composition (basic and acidic residues). Residues 1 to 22 (MEKARKEQLIREYATHEGDTGS) form a disordered region.

It belongs to the universal ribosomal protein uS15 family. Part of the 30S ribosomal subunit. Forms a bridge to the 50S subunit in the 70S ribosome, contacting the 23S rRNA.

One of the primary rRNA binding proteins, it binds directly to 16S rRNA where it helps nucleate assembly of the platform of the 30S subunit by binding and bridging several RNA helices of the 16S rRNA. In terms of biological role, forms an intersubunit bridge (bridge B4) with the 23S rRNA of the 50S subunit in the ribosome. This is Small ribosomal subunit protein uS15 from Clostridium novyi (strain NT).